Consider the following 72-residue polypeptide: Translation initiation factor IF-1 (72 aa).

In terms of domain architecture, S1-like spans 1 to 72; that stretch reads MAKDDVIEID…DKGRITFRYK (72 aa).

The protein belongs to the IF-1 family. In terms of assembly, component of the 30S ribosomal translation pre-initiation complex which assembles on the 30S ribosome in the order IF-2 and IF-3, IF-1 and N-formylmethionyl-tRNA(fMet); mRNA recruitment can occur at any time during PIC assembly.

It is found in the cytoplasm. One of the essential components for the initiation of protein synthesis. Stabilizes the binding of IF-2 and IF-3 on the 30S subunit to which N-formylmethionyl-tRNA(fMet) subsequently binds. Helps modulate mRNA selection, yielding the 30S pre-initiation complex (PIC). Upon addition of the 50S ribosomal subunit IF-1, IF-2 and IF-3 are released leaving the mature 70S translation initiation complex. The protein is Translation initiation factor IF-1 of Campylobacter jejuni subsp. doylei (strain ATCC BAA-1458 / RM4099 / 269.97).